A 489-amino-acid chain; its full sequence is L-asparagine permease (489 aa).

The next 12 helical transmembrane spans lie at 38–58 (HVNM…GAGG), 62–82 (DAGP…FFVV), 113–133 (VAGW…ITAI), 150–170 (VLAL…VKIF), 175–195 (FWFA…GIFL), 223–243 (VMPV…LELV), 268–288 (VALF…SSLY), 302–322 (IGVP…AMSS), 357–377 (YGGI…NYLV), 382–402 (FEIV…IIMI), 426–446 (SPVT…LMWN), and 452–472 (RKTV…WFGV).

The protein belongs to the amino acid-polyamine-organocation (APC) superfamily. Amino acid transporter (AAT) (TC 2.A.3.1) family.

The protein localises to the cell membrane. The chain is L-asparagine permease (ansP) from Streptomyces coelicolor (strain ATCC BAA-471 / A3(2) / M145).